The sequence spans 81 residues: MKTLLLTLVVVTIVCLDLGYTLKCNKLPPIASKTCPAGKNLCYKMFMMSDLTIPVKRGCIDVCPKNSLLVKYVCCNTDRCN.

The signal sequence occupies residues 1–21 (MKTLLLTLVVVTIVCLDLGYT). Intrachain disulfides connect C24–C42, C35–C59, C63–C74, and C75–C80.

The protein belongs to the three-finger toxin family. Short-chain subfamily. Type IA cytotoxin sub-subfamily. As to quaternary structure, monomer in solution; Homodimer and oligomer in the presence of negatively charged lipids forming a pore with a size ranging between 20 and 30 Angstroms. As to expression, expressed by the venom gland.

The protein localises to the secreted. It localises to the target cell membrane. Shows cytolytic activity on many different cells by forming pore in lipid membranes. In vivo, increases heart rate or kills the animal by cardiac arrest. In addition, it binds to heparin with high affinity, interacts with Kv channel-interacting protein 1 (KCNIP1) in a calcium-independent manner, and binds to integrin alpha-V/beta-3 (ITGAV/ITGB3) with moderate affinity. This Naja atra (Chinese cobra) protein is Cytotoxin 1a.